A 619-amino-acid polypeptide reads, in one-letter code: DNA mismatch repair protein MutL (619 aa).

The protein belongs to the DNA mismatch repair MutL/HexB family.

Its function is as follows. This protein is involved in the repair of mismatches in DNA. It is required for dam-dependent methyl-directed DNA mismatch repair. May act as a 'molecular matchmaker', a protein that promotes the formation of a stable complex between two or more DNA-binding proteins in an ATP-dependent manner without itself being part of a final effector complex. This is DNA mismatch repair protein MutL from Xylella fastidiosa (strain M23).